Reading from the N-terminus, the 614-residue chain is Zinc metalloproteinase-disintegrin-like VLAIP-B (614 aa).

Positions 1–20 (MMQVLLVTICLAVFPYQGSS) are cleaved as a signal peptide. Residues 21–193 (IILESGNVND…KASQLNLTPE (173 aa)) constitute a propeptide that is removed on maturation. A Pyrrolidone carboxylic acid modification is found at glutamine 194. The region spanning 202-398 (KYVELVIVAD…KMPQCILNKP (197 aa)) is the Peptidase M12B domain. Glutamate 205 is a Ca(2+) binding site. The N-linked (GlcNAc...) asparagine glycan is linked to asparagine 262. Position 289 (aspartate 289) interacts with Ca(2+). Cystine bridges form between cysteine 313–cysteine 393, cysteine 353–cysteine 377, and cysteine 355–cysteine 360. Histidine 338 contacts Zn(2+). Residue glutamate 339 is part of the active site. Zn(2+) contacts are provided by histidine 342 and histidine 348. Cysteine 393, asparagine 396, valine 408, asparagine 411, phenylalanine 413, glutamate 415, glutamate 418, and aspartate 421 together coordinate Ca(2+). The Disintegrin domain occupies 406–492 (PAVCGNYFVE…ECPTDQFQRN (87 aa)). Intrachain disulfides connect cysteine 409/cysteine 438, cysteine 420/cysteine 433, cysteine 422/cysteine 428, cysteine 432/cysteine 455, cysteine 446/cysteine 452, cysteine 451/cysteine 477, cysteine 464/cysteine 484, cysteine 471/cysteine 503, cysteine 496/cysteine 508, cysteine 515/cysteine 565, cysteine 530/cysteine 576, cysteine 543/cysteine 553, cysteine 560/cysteine 602, and cysteine 596/cysteine 607. Positions 470 to 472 (ECD) match the D/ECD-tripeptide motif. N-linked (GlcNAc...) asparagine glycans are attached at residues asparagine 505, asparagine 547, and asparagine 568.

The protein belongs to the venom metalloproteinase (M12B) family. P-III subfamily. P-IIIc sub-subfamily. As to quaternary structure, heterodimer; disulfide-linked. Requires Zn(2+) as cofactor. Post-translationally, the N-terminus is blocked. Expressed by the venom gland.

Its subcellular location is the secreted. With respect to regulation, inhibited by EDTA or 1,10-phenanthroline. Not inhibited by PMSF. In terms of biological role, this metalloproteinase hydrolyzes azocasein, and insulin B-chain (at the '38-Ala-|-Leu-39' bond). Also hydrolyzes the Aalpha-chain (FGA) and more slowly the Bbeta-chain of fibrinogen (FGB), without affecting the gamma-chain. Cleaves alpha-chain of fibrinogen at '432-Lys-|-Leu-433' and '535-Pro-|-Met-536' bonds. Does not cleave fibrin. Inhibits endothelial cell adhesion to extracellular matrix proteins such as fibrinogen, fibronectin, vitronectin, collagen I, and collagen IV. Induces apoptosis in vascular endothelial cells. The polypeptide is Zinc metalloproteinase-disintegrin-like VLAIP-B (Macrovipera lebetinus (Levantine viper)).